A 210-amino-acid chain; its full sequence is ATP phosphoribosyltransferase (210 aa).

It belongs to the ATP phosphoribosyltransferase family. Short subfamily. As to quaternary structure, heteromultimer composed of HisG and HisZ subunits.

The protein localises to the cytoplasm. It catalyses the reaction 1-(5-phospho-beta-D-ribosyl)-ATP + diphosphate = 5-phospho-alpha-D-ribose 1-diphosphate + ATP. It participates in amino-acid biosynthesis; L-histidine biosynthesis; L-histidine from 5-phospho-alpha-D-ribose 1-diphosphate: step 1/9. In terms of biological role, catalyzes the condensation of ATP and 5-phosphoribose 1-diphosphate to form N'-(5'-phosphoribosyl)-ATP (PR-ATP). Has a crucial role in the pathway because the rate of histidine biosynthesis seems to be controlled primarily by regulation of HisG enzymatic activity. In Bacillus cytotoxicus (strain DSM 22905 / CIP 110041 / 391-98 / NVH 391-98), this protein is ATP phosphoribosyltransferase.